The chain runs to 215 residues: Probable GTP-binding protein EngB (215 aa).

Residues 30–204 (TGIEVAFAGR…RQKLDTWFSE (175 aa)) enclose the EngB-type G domain. GTP is bound by residues 38–45 (GRSNAGKS), 65–69 (GRTQL), 83–86 (DLPG), 150–153 (TKAD), and 183–185 (FSS). Residues S45 and T67 each coordinate Mg(2+).

It belongs to the TRAFAC class TrmE-Era-EngA-EngB-Septin-like GTPase superfamily. EngB GTPase family. The cofactor is Mg(2+).

Its function is as follows. Necessary for normal cell division and for the maintenance of normal septation. The sequence is that of Probable GTP-binding protein EngB from Escherichia coli O1:K1 / APEC.